We begin with the raw amino-acid sequence, 212 residues long: Pyridoxine/pyridoxamine 5'-phosphate oxidase (212 aa).

Substrate contacts are provided by residues 8 to 11 (RKNY) and Lys66. FMN-binding positions include 61 to 66 (RIVLIK), 76 to 77 (FT), Arg82, Lys83, and Gln105. The substrate site is built by Tyr123, Arg127, and Ser131. Residues 140–141 (QS) and Trp184 each bind FMN. Position 190–192 (190–192 (RLH)) interacts with substrate. Arg194 is an FMN binding site.

This sequence belongs to the pyridoxamine 5'-phosphate oxidase family. In terms of assembly, homodimer. FMN is required as a cofactor.

The enzyme catalyses pyridoxamine 5'-phosphate + O2 + H2O = pyridoxal 5'-phosphate + H2O2 + NH4(+). It carries out the reaction pyridoxine 5'-phosphate + O2 = pyridoxal 5'-phosphate + H2O2. Its pathway is cofactor metabolism; pyridoxal 5'-phosphate salvage; pyridoxal 5'-phosphate from pyridoxamine 5'-phosphate: step 1/1. The protein operates within cofactor metabolism; pyridoxal 5'-phosphate salvage; pyridoxal 5'-phosphate from pyridoxine 5'-phosphate: step 1/1. Functionally, catalyzes the oxidation of either pyridoxine 5'-phosphate (PNP) or pyridoxamine 5'-phosphate (PMP) into pyridoxal 5'-phosphate (PLP). The chain is Pyridoxine/pyridoxamine 5'-phosphate oxidase from Paraburkholderia phymatum (strain DSM 17167 / CIP 108236 / LMG 21445 / STM815) (Burkholderia phymatum).